The primary structure comprises 264 residues: Phosphonates import ATP-binding protein PhnC (264 aa).

Residues 8 to 255 (LQAENLRMTF…KLIEIYGPEF (248 aa)) enclose the ABC transporter domain. 40-47 (GPSGSGKS) provides a ligand contact to ATP.

Belongs to the ABC transporter superfamily. Phosphonates importer (TC 3.A.1.9.1) family. In terms of assembly, the complex is composed of two ATP-binding proteins (PhnC), two transmembrane proteins (PhnE) and a solute-binding protein (PhnD).

The protein localises to the cell inner membrane. The enzyme catalyses phosphonate(out) + ATP + H2O = phosphonate(in) + ADP + phosphate + H(+). Part of the ABC transporter complex PhnCDE involved in phosphonates import. Responsible for energy coupling to the transport system. This is Phosphonates import ATP-binding protein PhnC from Maricaulis maris (strain MCS10) (Caulobacter maris).